Here is an 87-residue protein sequence, read N- to C-terminus: Citrate lyase acyl carrier protein (87 aa).

An O-(phosphoribosyl dephospho-coenzyme A)serine modification is found at S14.

This sequence belongs to the CitD family. In terms of assembly, oligomer with a subunit composition of (alpha,beta,gamma)6.

It is found in the cytoplasm. Its function is as follows. Covalent carrier of the coenzyme of citrate lyase. The sequence is that of Citrate lyase acyl carrier protein from Treponema denticola (strain ATCC 35405 / DSM 14222 / CIP 103919 / JCM 8153 / KCTC 15104).